The following is a 142-amino-acid chain: Hemoglobin subunit zeta (142 aa).

S2 is subject to N-acetylserine. One can recognise a Globin domain in the interval 2-142; that stretch reads SLMKNERAII…LSSILTEKYR (141 aa). Residue T29 is modified to Phosphothreonine. S53 carries the post-translational modification Phosphoserine. H59 contributes to the heme b binding site. At S73 the chain carries Phosphoserine. Heme b is bound at residue H88.

Belongs to the globin family. In terms of assembly, heterotetramer of two zeta chains and beta-type chains.

In terms of biological role, the zeta chain is an alpha-type chain of mammalian embryonic hemoglobin. The polypeptide is Hemoglobin subunit zeta (Hbz) (Mus musculus (Mouse)).